Reading from the N-terminus, the 110-residue chain is MFILVSVVNICTYIHLHMFPLISTFTSIGLGVLMKDKGKEGKTIKAQNVTYQTFEKYVESSSFFFLVHNFLNSSTMKTLLLMSNNNSISEIPSFSVLKILWKNGIYIAHI.

Residues M18–M34 traverse the membrane as a helical segment.

It is found in the membrane. This is an uncharacterized protein from Saccharomyces cerevisiae (strain ATCC 204508 / S288c) (Baker's yeast).